Reading from the N-terminus, the 650-residue chain is Pentatricopeptide repeat-containing protein At1g51965, mitochondrial (650 aa).

Residues 1–23 constitute a mitochondrion transit peptide; the sequence is MKLLRRRFFNSVNTITRPNRRHY. 14 PPR repeats span residues 132–169, 170–200, 202–236, 237–267, 269–303, 304–338, 339–369, 371–405, 406–440, 441–475, 476–510, 511–545, 546–580, and 581–615; these read DPFL…NVHG, NIST…WDLK, NSFT…GHKL, DIFA…RHCR, DEYT…GLTL, NVVG…GCRP, NEYT…SKRY, TQGI…PVKG, ERDS…GVVT, DTMM…GPSP, DIFT…DCKP, DIIS…GLNP, DVVT…GCQP, and NIVT…GLTP.

The protein belongs to the PPR family. P subfamily.

Its subcellular location is the mitochondrion. In Arabidopsis thaliana (Mouse-ear cress), this protein is Pentatricopeptide repeat-containing protein At1g51965, mitochondrial.